A 166-amino-acid chain; its full sequence is Putative signal peptidase complex catalytic subunit SEC11B (166 aa).

Topologically, residues 1–6 are cytoplasmic; the sequence is MNKWRL. Residues 7–24 form a helical; Signal-anchor for type II membrane protein membrane-spanning segment; that stretch reads YYQVLNFGMIVSSALMIW. Topologically, residues 25–166 are extracellular; sequence KGLMVITGSE…LGLFVLVHRE (142 aa). S43 is a catalytic residue.

The protein belongs to the peptidase S26B family.

The protein resides in the membrane. The enzyme catalyses Cleavage of hydrophobic, N-terminal signal or leader sequences from secreted and periplasmic proteins.. Its function is as follows. Putative component of some signal peptidase complex which removes signal peptides from nascent proteins as they are translocated into the lumen of the endoplasmic reticulum. The protein is Putative signal peptidase complex catalytic subunit SEC11B (SEC11B) of Homo sapiens (Human).